A 1215-amino-acid chain; its full sequence is Chromosome segregation protein sudA (1215 aa).

32 to 39 contributes to the ATP binding site; that stretch reads GRNGSGKS. Positions 177-522 form a coiled coil; sequence KIMHETNSKR…LSQMMDHNTS (346 aa). Positions 313–332 are disordered; that stretch reads SDNQAAAQESKARHDESLKA. Positions 538–650 constitute an SMC hinge domain; it reads EGVYGTLAEL…PNLQVASQYA (113 aa). A disordered region spans residues 654-676; the sequence is GVNATTPEGDRSDKRGALTGGFH. Residues 684 to 1091 are a coiled coil; sequence DAVKNLAKWR…EEAKHSVENY (408 aa).

Belongs to the SMC family. SMC3 subfamily.

It localises to the nucleus. In terms of biological role, involved in chromosome segregation in mitosis. The polypeptide is Chromosome segregation protein sudA (sudA) (Emericella nidulans (strain FGSC A4 / ATCC 38163 / CBS 112.46 / NRRL 194 / M139) (Aspergillus nidulans)).